Reading from the N-terminus, the 214-residue chain is MQLFHLCLIISCTCPTVQASKLCLGWLWGMDIDPYKEFGATVELLSFLPSDFFPSVRDLLDTASALYREALESPEHCSPHHTALRQAILCWGELMTLATWVGNNLQDPASRDLVVNYVNTNMGLKIRQLLWFHISCLTFGRETVLEYLVSFGVWIRTPPAYRPPNAPILSTLPETTVVRRRDRGRSPRRRTPSPRRRRSQSPRRRRSQSRESQC.

The first 19 residues, 1–19 (MQLFHLCLIISCTCPTVQA), serve as a signal peptide directing secretion. The segment at 25–27 (GWL) is HBEAG. Residues 165–214 (NAPILSTLPETTVVRRRDRGRSPRRRTPSPRRRRSQSPRRRRSQSRESQC) form a disordered region. Residues 178–207 (VRRRDRGRSPRRRTPSPRRRRSQSPRRRRS) are compositionally biased toward basic residues. The 1; half-length repeat unit spans residues 186-192 (SPRRRTP). The 3 X 8 AA repeats of S-P-R-R-R-R-S-Q stretch occupies residues 186–208 (SPRRRTPSPRRRRSQSPRRRRSQ). A propeptide spanning residues 186–214 (SPRRRTPSPRRRRSQSPRRRRSQSRESQC) is cleaved from the precursor. Tandem repeats lie at residues 193 to 200 (SPRRRRSQ) and 201 to 208 (SPRRRRSQ).

Belongs to the orthohepadnavirus precore antigen family. Homodimerizes. Post-translationally, phosphorylated. Cleaved by host furin.

Its subcellular location is the secreted. It is found in the host nucleus. Its function is as follows. May regulate immune response to the intracellular capsid in acting as a T-cell tolerogen, by having an immunoregulatory effect which prevents destruction of infected cells by cytotoxic T-cells. This immune regulation may predispose to chronicity during perinatal infections and prevent severe liver injury during adult infections. The sequence is that of External core antigen from Homo sapiens (Human).